A 300-amino-acid chain; its full sequence is Cation-efflux pump FieF (300 aa).

Residues Leu-24–Val-44 traverse the membrane as a helical segment. Zn(2+) is bound by residues Asp-45 and Asp-49. A run of 2 helical transmembrane segments spans residues Ala-82–Ile-102 and Ala-114–Phe-134. Positions 153 and 157 each coordinate Zn(2+). 2 helical membrane passes run Ser-156–His-176 and Ala-178–Gly-198.

This sequence belongs to the cation diffusion facilitator (CDF) transporter (TC 2.A.4) family. FieF subfamily. In terms of assembly, homodimer.

It is found in the cell inner membrane. The enzyme catalyses Zn(2+)(in) + H(+)(out) = Zn(2+)(out) + H(+)(in). The catalysed reaction is Cd(2+)(in) + H(+)(out) = Cd(2+)(out) + H(+)(in). It catalyses the reaction Fe(2+)(in) + H(+)(out) = Fe(2+)(out) + H(+)(in). Its function is as follows. Divalent metal cation transporter which exports Zn(2+), Cd(2+) and possibly Fe(2+). May be involved in zinc and iron detoxification by efflux. The sequence is that of Cation-efflux pump FieF from Klebsiella pneumoniae subsp. pneumoniae (strain ATCC 700721 / MGH 78578).